The primary structure comprises 947 residues: Transcriptional regulator WAR1 (947 aa).

Positions methionine 1–serine 10 are enriched in basic and acidic residues. Residues methionine 1–valine 52 form a disordered region. Residues serine 19 to serine 38 show a composition bias toward low complexity. Positions cysteine 54–cysteine 86 form a DNA-binding region, zn(2)-C6 fungal-type. The interval arginine 96–asparagine 222 is disordered. Over residues asparagine 129–asparagine 142 the composition is skewed to low complexity. Polar residues-rich tracts occupy residues aspartate 143–proline 158 and glutamine 167–alanine 185.

As to quaternary structure, homodimer.

It localises to the nucleus. Functionally, transcription factor required for yeast cell adherence to silicone substrate. Plays a role in resistance to weak organic acids such as acetate and sorbate. Binds in vitro to a nitric oxide-responsive element (NORE) but seems not to be involved in response to nitrosative stress. In Candida albicans (strain SC5314 / ATCC MYA-2876) (Yeast), this protein is Transcriptional regulator WAR1 (WAR1).